The primary structure comprises 99 residues: Aspartyl/glutamyl-tRNA(Asn/Gln) amidotransferase subunit C (99 aa).

It belongs to the GatC family. As to quaternary structure, heterotrimer of A, B and C subunits.

The catalysed reaction is L-glutamyl-tRNA(Gln) + L-glutamine + ATP + H2O = L-glutaminyl-tRNA(Gln) + L-glutamate + ADP + phosphate + H(+). It carries out the reaction L-aspartyl-tRNA(Asn) + L-glutamine + ATP + H2O = L-asparaginyl-tRNA(Asn) + L-glutamate + ADP + phosphate + 2 H(+). Its function is as follows. Allows the formation of correctly charged Asn-tRNA(Asn) or Gln-tRNA(Gln) through the transamidation of misacylated Asp-tRNA(Asn) or Glu-tRNA(Gln) in organisms which lack either or both of asparaginyl-tRNA or glutaminyl-tRNA synthetases. The reaction takes place in the presence of glutamine and ATP through an activated phospho-Asp-tRNA(Asn) or phospho-Glu-tRNA(Gln). The chain is Aspartyl/glutamyl-tRNA(Asn/Gln) amidotransferase subunit C from Rhodococcus opacus (strain B4).